The following is a 227-amino-acid chain: Flagellar L-ring protein (227 aa).

Positions 1–16 are cleaved as a signal peptide; the sequence is MRNIILFAAGTLLLSG. C17 carries the N-palmitoyl cysteine lipid modification. The S-diacylglycerol cysteine moiety is linked to residue C17.

It belongs to the FlgH family. In terms of assembly, the basal body constitutes a major portion of the flagellar organelle and consists of four rings (L,P,S, and M) mounted on a central rod.

The protein resides in the cell outer membrane. The protein localises to the bacterial flagellum basal body. Its function is as follows. Assembles around the rod to form the L-ring and probably protects the motor/basal body from shearing forces during rotation. This is Flagellar L-ring protein from Pseudoalteromonas translucida (strain TAC 125).